Consider the following 333-residue polypeptide: UDP-glucose 4-epimerase (333 aa).

Residues 11-12 (YI), 32-37 (DSLVTG), 52-53 (DL), 75-79 (FAAYS), N94, T119, Y143, K147, and F171 each bind NAD(+). Residues T119 and Y143 each contribute to the substrate site. Y143 serves as the catalytic Proton acceptor. Residues N172, 191–192 (HL), 208–210 (MIF), R223, and 284–287 (RSGD) contribute to the substrate site.

The protein belongs to the NAD(P)-dependent epimerase/dehydratase family. In terms of assembly, homodimer. NAD(+) is required as a cofactor.

The enzyme catalyses UDP-alpha-D-glucose = UDP-alpha-D-galactose. The protein operates within carbohydrate metabolism; galactose metabolism. Functionally, involved in the metabolism of galactose. Catalyzes the conversion of UDP-galactose (UDP-Gal) to UDP-glucose (UDP-Glc) through a mechanism involving the transient reduction of NAD. This Streptococcus mutans serotype c (strain ATCC 700610 / UA159) protein is UDP-glucose 4-epimerase (galE).